A 484-amino-acid polypeptide reads, in one-letter code: Proline--tRNA ligase (484 aa).

The protein belongs to the class-II aminoacyl-tRNA synthetase family. ProS type 3 subfamily. Homodimer.

Its subcellular location is the cytoplasm. It catalyses the reaction tRNA(Pro) + L-proline + ATP = L-prolyl-tRNA(Pro) + AMP + diphosphate. Functionally, catalyzes the attachment of proline to tRNA(Pro) in a two-step reaction: proline is first activated by ATP to form Pro-AMP and then transferred to the acceptor end of tRNA(Pro). The chain is Proline--tRNA ligase from Haloarcula marismortui (strain ATCC 43049 / DSM 3752 / JCM 8966 / VKM B-1809) (Halobacterium marismortui).